A 230-amino-acid polypeptide reads, in one-letter code: UPF0173 metal-dependent hydrolase SPO2976 (230 aa).

Belongs to the UPF0173 family.

The protein is UPF0173 metal-dependent hydrolase SPO2976 of Ruegeria pomeroyi (strain ATCC 700808 / DSM 15171 / DSS-3) (Silicibacter pomeroyi).